The following is a 97-amino-acid chain: uncharacterized protein (97 aa).

May have a regulatory function. This is an uncharacterized protein from Synechocystis sp. (strain ATCC 27184 / PCC 6803 / Kazusa).